A 373-amino-acid polypeptide reads, in one-letter code: D-alanine--D-alanine ligase (373 aa).

The 208-residue stretch at 156 to 363 (KKLLAADGLP…YPTLLATMIE (208 aa)) folds into the ATP-grasp domain. 184 to 239 (CERLGLPVFVKPARGGSSIGVSRVSSWDQLPAAVARARRHDPKVIVEAAISGRELE) provides a ligand contact to ATP. Mg(2+) is bound by residues Asp-318, Glu-330, and Asn-332.

Belongs to the D-alanine--D-alanine ligase family. Requires Mg(2+) as cofactor. Mn(2+) is required as a cofactor.

It is found in the cytoplasm. It carries out the reaction 2 D-alanine + ATP = D-alanyl-D-alanine + ADP + phosphate + H(+). It participates in cell wall biogenesis; peptidoglycan biosynthesis. In terms of biological role, cell wall formation. In Mycobacterium tuberculosis (strain ATCC 25177 / H37Ra), this protein is D-alanine--D-alanine ligase.